The sequence spans 142 residues: Hemoglobin subunit alpha-4 (142 aa).

Residues 2–142 (TLTDSDKAAI…VATVLTSKYR (141 aa)) form the Globin domain. Position 59 (His-59) interacts with O2. Residue His-88 participates in heme b binding.

The protein belongs to the globin family. Heterotetramer of two alpha chains and two beta chains. As to expression, red blood cells.

This is a larval (tadpole) alpha-globin. This chain is Hemoglobin subunit alpha-4 (hba4), found in Xenopus laevis (African clawed frog).